A 430-amino-acid chain; its full sequence is Elongation factor Tu (430 aa).

In terms of domain architecture, tr-type G spans 13 to 220 (RPHLNIGTIG…ACDKYIALPE (208 aa)). The segment at 22–29 (GHVDHGKT) is G1. Residue 22–29 (GHVDHGKT) coordinates GTP. Residue threonine 29 coordinates Mg(2+). The interval 66–70 (GITIS) is G2. Positions 87–90 (DCPG) are G3. GTP is bound by residues 87–91 (DCPGH) and 142–145 (NKCD). The G4 stretch occupies residues 142–145 (NKCD). A G5 region spans residues 188 to 190 (SAL).

It belongs to the TRAFAC class translation factor GTPase superfamily. Classic translation factor GTPase family. EF-Tu/EF-1A subfamily. Monomer.

The protein resides in the cytoplasm. The enzyme catalyses GTP + H2O = GDP + phosphate + H(+). Functionally, GTP hydrolase that promotes the GTP-dependent binding of aminoacyl-tRNA to the A-site of ribosomes during protein biosynthesis. The protein is Elongation factor Tu of Neorickettsia sennetsu (strain ATCC VR-367 / Miyayama) (Ehrlichia sennetsu).